Reading from the N-terminus, the 64-residue chain is Large ribosomal subunit protein bL35 (64 aa).

Belongs to the bacterial ribosomal protein bL35 family.

This is Large ribosomal subunit protein bL35 from Vibrio atlanticus (strain LGP32) (Vibrio splendidus (strain Mel32)).